A 299-amino-acid chain; its full sequence is Putative zinc-binding protein ORF12 (299 aa).

The polypeptide is Putative zinc-binding protein ORF12 (ORF12) (Ictaluridae (bullhead catfishes)).